We begin with the raw amino-acid sequence, 515 residues long: 2,3-bisphosphoglycerate-independent phosphoglycerate mutase 1 (515 aa).

Residues Asp-14 and Ser-64 each coordinate Mn(2+). The active-site Phosphoserine intermediate is Ser-64. Substrate contacts are provided by residues His-125, 155–156 (RD), Arg-187, Arg-193, 264–267 (RADR), and Lys-337. Mn(2+)-binding residues include Asp-404, His-408, Asp-445, His-446, and His-464.

It belongs to the BPG-independent phosphoglycerate mutase family. Mn(2+) serves as cofactor.

It carries out the reaction (2R)-2-phosphoglycerate = (2R)-3-phosphoglycerate. Its pathway is carbohydrate degradation; glycolysis; pyruvate from D-glyceraldehyde 3-phosphate: step 3/5. Its function is as follows. Catalyzes the interconversion of 2-phosphoglycerate and 3-phosphoglycerate. This is 2,3-bisphosphoglycerate-independent phosphoglycerate mutase 1 from Methanosarcina acetivorans (strain ATCC 35395 / DSM 2834 / JCM 12185 / C2A).